The primary structure comprises 225 residues: Transmembrane protein C16orf54 homolog (225 aa).

The chain crosses the membrane as a helical span at residues 32 to 52; sequence PCIPIMLGLASLTAFFIITTA. Disordered regions lie at residues 106–163 and 178–200; these read DRAP…ERPH and EAGLQVGSPRPWRPRQGSLEPDW. 2 positions are modified to phosphothreonine: T113 and T117. Positions 122 to 140 are enriched in low complexity; the sequence is ATAPPATSAPYSSLSSLVP. The residue at position 195 (S195) is a Phosphoserine.

The protein resides in the membrane. This is Transmembrane protein C16orf54 homolog from Mus musculus (Mouse).